The following is a 347-amino-acid chain: ATPase GET3 (347 aa).

ATP is bound at residue 26-33 (KGGVGKTT). D57 is an active-site residue. E241 and N268 together coordinate ATP. Zn(2+)-binding residues include C279 and C282.

The protein belongs to the arsA ATPase family. Homodimer. Component of the Golgi to ER traffic (GET) complex, which is composed of GET1, GET2 and GET3. Within the complex, GET1 and GET2 form a heterotetramer which is stabilized by phosphatidylinositol binding and which binds to the GET3 homodimer. Interacts with the chloride channel protein GEF1.

The protein localises to the cytoplasm. Its subcellular location is the endoplasmic reticulum. It is found in the golgi apparatus. ATPase required for the post-translational delivery of tail-anchored (TA) proteins to the endoplasmic reticulum. Recognizes and selectively binds the transmembrane domain of TA proteins in the cytosol. This complex then targets to the endoplasmic reticulum by membrane-bound receptors GET1 and GET2, where the tail-anchored protein is released for insertion. This process is regulated by ATP binding and hydrolysis. ATP binding drives the homodimer towards the closed dimer state, facilitating recognition of newly synthesized TA membrane proteins. ATP hydrolysis is required for insertion. Subsequently, the homodimer reverts towards the open dimer state, lowering its affinity for the GET1-GET2 receptor, and returning it to the cytosol to initiate a new round of targeting. Cooperates with the HDEL receptor ERD2 to mediate the ATP-dependent retrieval of resident ER proteins that contain a C-terminal H-D-E-L retention signal from the Golgi to the ER. Involved in low-level resistance to the oxyanions arsenite and arsenate, and in heat tolerance. The polypeptide is ATPase GET3 (Meyerozyma guilliermondii (strain ATCC 6260 / CBS 566 / DSM 6381 / JCM 1539 / NBRC 10279 / NRRL Y-324) (Yeast)).